The chain runs to 372 residues: Heterogeneous nuclear rnp K-like protein 2 (372 aa).

A compositionally biased stretch (polar residues) spans 1–23 (MSDINDPNSISLPVGSSCTSRGA). A disordered region spans residues 1-49 (MSDINDPNSISLPVGSSCTSRGASTETFTTSRSTTLFSSQQESKDEGNV). A compositionally biased stretch (low complexity) spans 24-39 (STETFTTSRSTTLFSS). KH domains lie at 59–123 (TINH…LGQI), 167–232 (IGTS…LLQI), and 283–354 (EFKA…ESML).

Belongs to the HEK2 family. In terms of assembly, binds RNA.

It localises to the cytoplasm. Its subcellular location is the P-body. The protein resides in the nucleus. The protein localises to the chromosome. It is found in the telomere. In terms of biological role, RNA-binding protein involved in the correct localization of transcripts in the cell. RNA localization is a widespread mechanism for achieving localized protein synthesis. Involved in structural and functional organization of telomeric chromatin and regulates silencing at the HMR locus. This Zygosaccharomyces rouxii (strain ATCC 2623 / CBS 732 / NBRC 1130 / NCYC 568 / NRRL Y-229) protein is Heterogeneous nuclear rnp K-like protein 2 (HEK2).